The primary structure comprises 176 residues: ATP-dependent protease subunit HslV (176 aa).

Residue Thr2 is part of the active site. Residues Ser157, Cys160, and Thr163 each contribute to the Na(+) site.

The protein belongs to the peptidase T1B family. HslV subfamily. In terms of assembly, a double ring-shaped homohexamer of HslV is capped on each side by a ring-shaped HslU homohexamer. The assembly of the HslU/HslV complex is dependent on binding of ATP.

The protein resides in the cytoplasm. It carries out the reaction ATP-dependent cleavage of peptide bonds with broad specificity.. With respect to regulation, allosterically activated by HslU binding. Functionally, protease subunit of a proteasome-like degradation complex believed to be a general protein degrading machinery. This Buchnera aphidicola subsp. Baizongia pistaciae (strain Bp) protein is ATP-dependent protease subunit HslV.